A 370-amino-acid chain; its full sequence is Aminomethyltransferase (370 aa).

This sequence belongs to the GcvT family. In terms of assembly, the glycine cleavage system is composed of four proteins: P, T, L and H.

The catalysed reaction is N(6)-[(R)-S(8)-aminomethyldihydrolipoyl]-L-lysyl-[protein] + (6S)-5,6,7,8-tetrahydrofolate = N(6)-[(R)-dihydrolipoyl]-L-lysyl-[protein] + (6R)-5,10-methylene-5,6,7,8-tetrahydrofolate + NH4(+). In terms of biological role, the glycine cleavage system catalyzes the degradation of glycine. In Stenotrophomonas maltophilia (strain K279a), this protein is Aminomethyltransferase.